A 491-amino-acid polypeptide reads, in one-letter code: Cytochrome P450 2H2 (491 aa).

Position 436 (cysteine 436) interacts with heme.

This sequence belongs to the cytochrome P450 family. Requires heme as cofactor.

The protein localises to the endoplasmic reticulum membrane. Its subcellular location is the microsome membrane. It catalyses the reaction an organic molecule + reduced [NADPH--hemoprotein reductase] + O2 = an alcohol + oxidized [NADPH--hemoprotein reductase] + H2O + H(+). In terms of biological role, cytochromes P450 are a group of heme-thiolate monooxygenases. In liver microsomes, this enzyme is involved in an NADPH-dependent electron transport pathway. It oxidizes a variety of structurally unrelated compounds, including steroids, fatty acids, and xenobiotics. This Gallus gallus (Chicken) protein is Cytochrome P450 2H2 (CYP2H2).